Here is a 107-residue protein sequence, read N- to C-terminus: MADKLSSTDAMGCWSPTFCFISLISSSTSELPLFVVEVGIAAYSLEDPPAILSILVLNALEVSSFISTVKKFAFCATKNTNNNNSVVMLKILAFLLLEGIIIKLFLY.

3 consecutive transmembrane segments (helical) span residues 20-40 (FISL…EVGI), 49-69 (PAIL…ISTV), and 86-106 (VVML…KLFL).

It is found in the membrane. This is an uncharacterized protein from Saccharomyces cerevisiae (strain ATCC 204508 / S288c) (Baker's yeast).